Reading from the N-terminus, the 365-residue chain is Phosphatidylcholine:ceramide cholinephosphotransferase 4 (365 aa).

At 1-44 the chain is on the cytoplasmic side; the sequence is MISYPFFSLSPPGLVPPPMAVPPVEMYSGSFWNRMRKPLPLRTQ. A helical transmembrane segment spans residues 45–65; sequence VIRFTVVFVIVSFILAVALQI. Topologically, residues 66 to 92 are lumenal; that stretch reads THERMPDPKVTKPLPDLGFELLTKVPG. The helical transmembrane segment at 93 to 113 threads the bilayer; the sequence is MYVLADCCIGFLNILSVFTAF. Topologically, residues 114 to 165 are cytoplasmic; the sequence is KLYLLHRHCVGSGEPELPCNIPGVSRFFLSVWLCKENCRIELRNIHTIAWIR. The chain crosses the membrane as a helical span at residues 166-186; that stretch reads FITSYALLLLFRSAVIVMTSL. The Lumenal portion of the chain corresponds to 187–229; that stretch reads PAPDDLCQDPPKIENPVKNVILTVLTAGGGSIHCGDLMYSGHT. The active site involves His228. The helical transmembrane segment at 230–250 threads the bilayer; that stretch reads VILTLHLMFHWIYGAMVHWSF. Position 251 (Arg251) is a topological domain, cytoplasmic. Residues 252–272 form a helical membrane-spanning segment; the sequence is PVVTVVAIFGYYCIVASRFHY. Catalysis depends on residues His271 and Asp275. Over 273-275 the chain is Lumenal; the sequence is TDD. The helical transmembrane segment at 276-296 threads the bilayer; that stretch reads VLVAIYLTIATFIAVGHNADG. Over 297–365 the chain is Cytoplasmic; sequence APWQLQLFIR…SLMFKCGAYV (69 aa).

The protein belongs to the sphingomyelin synthase family.

The protein resides in the golgi apparatus membrane. It catalyses the reaction an N-acylsphing-4-enine + a 1,2-diacyl-sn-glycero-3-phosphocholine = a sphingomyelin + a 1,2-diacyl-sn-glycerol. The catalysed reaction is an N-acylsphinganine + a 1,2-diacyl-sn-glycero-3-phosphocholine = an N-acylsphinganine-1-phosphocholine + a 1,2-diacyl-sn-glycerol. The enzyme catalyses an N-acylsphing-4-enine + a 1,2-diacyl-sn-glycero-3-phosphoethanolamine = an N-acylsphing-4-enine 1-phosphoethanolamine + a 1,2-diacyl-sn-glycerol. It carries out the reaction an N-acylsphinganine + a 1,2-diacyl-sn-glycero-3-phosphoethanolamine = an N-acylsphinganine-1-phosphoethanolamine + a 1,2-diacyl-sn-glycerol. It catalyses the reaction a 1,2-diacyl-sn-glycero-3-phospho-(1D-myo-inositol) + an N-acylsphing-4-enine = an N-acylsphing-4-enine-(1D-myo-inositol) + a 1,2-diacyl-sn-glycerol. The catalysed reaction is an N-acylsphinganine + a 1,2-diacyl-sn-glycero-3-phospho-(1D-myo-inositol) = an N-acylsphinganine-(1D-myo-inositol) + a 1,2-diacyl-sn-glycerol. Bifunctional sphingomyelin (SM)/ethanolamine phosphorylceramide (EPC) synthase with minimal inositol phosphorylceramide (IPC) synthase activity. Specificity is likely to be defined by residues in the lumenal catalytic domain that interact with the polar head groups of the phospholipid donors. SM is synthesized by both stages of the parasite life cycle, bloodstream forms (BSF) and procyclic forms (PCF), by transferring the phosphoryl headgroup from a 1,2-diacyl-sn-glycero-3-phosphocholine to an N-acylsphing-4-enine (ceramide) or an N-acylsphinganine (dihydroceramide) with release of 1,2-diacyl-sn-glycerol. Also catalyzes the reverse reaction, production of ceramide from sphingomyelin. EPC is synthesized by transferring phosphoethanolamine from a 1,2-diacyl-sn-glycero-3-phosphoethanolamine to ceramide or dihydroceramide by BSF and PCF, while IPC is confined to PCF. The ceramide/dihydroceramide ratios are skewed towards dihydroceramide in PCF parasites and ceramide in BSF parasites, this is likely due to differential expression and/or regulation of dihydroceramide desaturase, the enzyme responsible for converting dihydroceramide to ceramide. The sequence is that of Phosphatidylcholine:ceramide cholinephosphotransferase 4 from Trypanosoma brucei brucei.